The primary structure comprises 371 residues: 4-hydroxy-3-methylbut-2-en-1-yl diphosphate synthase (flavodoxin) (371 aa).

Residues cysteine 270, cysteine 273, cysteine 305, and glutamate 312 each contribute to the [4Fe-4S] cluster site.

The protein belongs to the IspG family. It depends on [4Fe-4S] cluster as a cofactor.

The enzyme catalyses (2E)-4-hydroxy-3-methylbut-2-enyl diphosphate + oxidized [flavodoxin] + H2O + 2 H(+) = 2-C-methyl-D-erythritol 2,4-cyclic diphosphate + reduced [flavodoxin]. It functions in the pathway isoprenoid biosynthesis; isopentenyl diphosphate biosynthesis via DXP pathway; isopentenyl diphosphate from 1-deoxy-D-xylulose 5-phosphate: step 5/6. Its function is as follows. Converts 2C-methyl-D-erythritol 2,4-cyclodiphosphate (ME-2,4cPP) into 1-hydroxy-2-methyl-2-(E)-butenyl 4-diphosphate. The sequence is that of 4-hydroxy-3-methylbut-2-en-1-yl diphosphate synthase (flavodoxin) from Shewanella denitrificans (strain OS217 / ATCC BAA-1090 / DSM 15013).